The sequence spans 222 residues: Interleukin-12 subunit alpha (222 aa).

The first 25 residues, 1–25 (MCPPRGLLLVTILVLLSHLDHLTWA), serve as a signal peptide directing secretion. Disulfide bonds link C40-C113, C67-C199, and C88-C126. N42, N96, and N110 each carry an N-linked (GlcNAc...) asparagine glycan.

It belongs to the IL-6 superfamily. In terms of assembly, heterodimer with IL12B; disulfide-linked. This heterodimer is known as interleukin IL-12. Heterodimer with EBI3/IL27B; not disulfide-linked. This heterodimer is known as interleukin IL-35. Interacts with NBR1; this interaction promotes IL-12 secretion.

The protein localises to the secreted. In terms of biological role, heterodimerizes with IL12B to form the IL-12 cytokine or with EBI3/IL27B to form the IL-35 cytokine. IL-12 is primarily produced by professional antigen-presenting cells (APCs) such as B-cells and dendritic cells (DCs) as well as macrophages and granulocytes and regulates T-cell and natural killer-cell responses, induces the production of interferon-gamma (IFN-gamma), favors the differentiation of T-helper 1 (Th1) cells and is an important link between innate resistance and adaptive immunity. Mechanistically, exerts its biological effects through a receptor composed of IL12R1 and IL12R2 subunits. Binding to the receptor results in the rapid tyrosine phosphorylation of a number of cellular substrates including the JAK family kinases TYK2 and JAK2. In turn, recruited STAT4 gets phosphorylated and translocates to the nucleus where it regulates cytokine/growth factor responsive genes. As part of IL-35, plays essential roles in maintaining the immune homeostasis of the liver microenvironment and also functions as an immune-suppressive cytokine. Mediates biological events through unconventional receptors composed of IL12RB2 and gp130/IL6ST heterodimers or homodimers. Signaling requires the transcription factors STAT1 and STAT4, which form a unique heterodimer that binds to distinct DNA sites. This chain is Interleukin-12 subunit alpha (IL12A), found in Canis lupus familiaris (Dog).